We begin with the raw amino-acid sequence, 206 residues long: Uridine kinase (206 aa).

An ATP-binding site is contributed by 9–16; sequence GGSGSGKT.

Belongs to the uridine kinase family.

The protein resides in the cytoplasm. It carries out the reaction uridine + ATP = UMP + ADP + H(+). It catalyses the reaction cytidine + ATP = CMP + ADP + H(+). Its pathway is pyrimidine metabolism; CTP biosynthesis via salvage pathway; CTP from cytidine: step 1/3. It functions in the pathway pyrimidine metabolism; UMP biosynthesis via salvage pathway; UMP from uridine: step 1/1. The chain is Uridine kinase from Borrelia garinii subsp. bavariensis (strain ATCC BAA-2496 / DSM 23469 / PBi) (Borreliella bavariensis).